The sequence spans 501 residues: ATP synthase subunit alpha (501 aa).

170-177 (GDRQTGKS) serves as a coordination point for ATP.

Belongs to the ATPase alpha/beta chains family. F-type ATPases have 2 components, CF(1) - the catalytic core - and CF(0) - the membrane proton channel. CF(1) has five subunits: alpha(3), beta(3), gamma(1), delta(1), epsilon(1). CF(0) has three main subunits: a(1), b(2) and c(9-12). The alpha and beta chains form an alternating ring which encloses part of the gamma chain. CF(1) is attached to CF(0) by a central stalk formed by the gamma and epsilon chains, while a peripheral stalk is formed by the delta and b chains.

The protein resides in the cell membrane. It catalyses the reaction ATP + H2O + 4 H(+)(in) = ADP + phosphate + 5 H(+)(out). Its function is as follows. Produces ATP from ADP in the presence of a proton gradient across the membrane. The alpha chain is a regulatory subunit. This is ATP synthase subunit alpha from Acholeplasma laidlawii (strain PG-8A).